We begin with the raw amino-acid sequence, 113 residues long: Class I hydrophobin 1 (113 aa).

The N-terminal stretch at 1–17 (MQFKFLSTVALATLAVA) is a signal peptide. 4 cysteine pairs are disulfide-bonded: Cys32–Cys92, Cys39–Cys86, Cys40–Cys73, and Cys93–Cys106.

The protein belongs to the fungal hydrophobin family. In terms of assembly, self-assembles to form functional amyloid fibrils called rodlets. Self-assembly into fibrillar rodlets occurs spontaneously at hydrophobic:hydrophilic interfaces and the rodlets further associate laterally to form amphipathic monolayers.

The protein localises to the secreted. It is found in the cell wall. In terms of biological role, aerial growth, conidiation, and dispersal of filamentous fungi in the environment rely upon a capability of their secreting small amphipathic proteins called hydrophobins (HPBs) with low sequence identity. Class I can self-assemble into an outermost layer of rodlet bundles on aerial cell surfaces, conferring cellular hydrophobicity that supports fungal growth, development and dispersal; whereas Class II form highly ordered films at water-air interfaces through intermolecular interactions but contribute nothing to the rodlet structure. CoH1 is an asexual monokaryon-specific class I hydrophobin that is involved in aerial growth of mycelia. In Coprinopsis cinerea (Inky cap fungus), this protein is Class I hydrophobin 1.